We begin with the raw amino-acid sequence, 466 residues long: ATP synthase subunit beta (466 aa).

Position 153 to 160 (153 to 160 (GGAGVGKT)) interacts with ATP.

The protein belongs to the ATPase alpha/beta chains family. In terms of assembly, F-type ATPases have 2 components, CF(1) - the catalytic core - and CF(0) - the membrane proton channel. CF(1) has five subunits: alpha(3), beta(3), gamma(1), delta(1), epsilon(1). CF(0) has three main subunits: a(1), b(2) and c(9-12). The alpha and beta chains form an alternating ring which encloses part of the gamma chain. CF(1) is attached to CF(0) by a central stalk formed by the gamma and epsilon chains, while a peripheral stalk is formed by the delta and b chains.

Its subcellular location is the cell membrane. The enzyme catalyses ATP + H2O + 4 H(+)(in) = ADP + phosphate + 5 H(+)(out). Its function is as follows. Produces ATP from ADP in the presence of a proton gradient across the membrane. The catalytic sites are hosted primarily by the beta subunits. This chain is ATP synthase subunit beta, found in Leuconostoc mesenteroides subsp. mesenteroides (strain ATCC 8293 / DSM 20343 / BCRC 11652 / CCM 1803 / JCM 6124 / NCDO 523 / NBRC 100496 / NCIMB 8023 / NCTC 12954 / NRRL B-1118 / 37Y).